Consider the following 35-residue polypeptide: Bacteriocin lactococcin-G subunit beta (35 aa).

Bacteriocin activity requires interaction of alpha and beta peptides in a molar ratio of 7:1 or 8:1 respectively.

Its function is as follows. Kills Lactococci. This is Bacteriocin lactococcin-G subunit beta from Lactococcus lactis subsp. lactis (Streptococcus lactis).